Reading from the N-terminus, the 2442-residue chain is CREB-binding protein (2442 aa).

Disordered stretches follow at residues 1 to 41 and 74 to 179; these read MAEN…NDLP and LRGG…CMNA. An N-acetylalanine modification is found at Ala2. The span at 20-30 shows a compositional bias: polar residues; sequence PGFSANDSTDF. The span at 80–90 shows a compositional bias: low complexity; the sequence is SSINPGIGNVS. Residue Ser121 is modified to Phosphoserine. A compositionally biased stretch (polar residues) spans 122-131; the sequence is PLSQGDSSAP. A Phosphoserine; by ATM modification is found at Ser124. Residues 136-150 show a composition bias toward low complexity; it reads QAASTSGPTPAASQA. The span at 151–172 shows a compositional bias: polar residues; that stretch reads LNPQAQKQVGLATSSPATSQTG. The residue at position 220 (Arg220) is an Omega-N-methylarginine. The segment at 227–410 is interaction with SRCAP; it reads PTPAMQGASS…GKACQVAHCA (184 aa). Residues 266-290 are disordered; the sequence is KMGITGNTSPFGQPFSQAGGQPMGA. The segment covering 270 to 284 has biased composition (polar residues); that stretch reads TGNTSPFGQPFSQAG. The TAZ-type 1 zinc finger occupies 347–433; it reads DPEKRKLIQQ…RHDCPVCLPL (87 aa). 12 residues coordinate Zn(2+): His363, Cys367, Cys380, Cys385, His394, Cys398, Cys404, Cys409, His418, Cys422, Cys427, and Cys430. The 80-residue stretch at 587–666 folds into the KIX domain; it reads GVRKGWHEHV…KIYKIQKELE (80 aa). Residues Arg601 and Arg625 each carry the asymmetric dimethylarginine modification. Lys657 is modified (N6-acetyllysine). Polar residues-rich tracts occupy residues 794–805 and 814–823; these read LPQNQFPSSSGA and PAQTGVSQGQ. Residues 794–1083 form a disordered region; that stretch reads LPQNQFPSSS…STSPSQPRKK (290 aa). Composition is skewed to pro residues over residues 844–860 and 876–885; these read PCPPVTQSPLHPTPPPA and GMTPPQPAAP. Low complexity-rich tracts occupy residues 886–929 and 937–952; these read TQPS…VTPQ and PSVATPQSSQQQPTPV. The segment covering 973–988 has biased composition (polar residues); the sequence is PTPSSVASAETNSQQP. Residue Lys998 forms a Glycyl lysine isopeptide (Lys-Gly) (interchain with G-Cter in SUMO1) linkage. Over residues 1011–1021 the composition is skewed to basic and acidic residues; the sequence is GESKGEPRSEM. Lys1014 bears the N6-acetyllysine mark. Ser1030 carries the phosphoserine modification. Positions 1032-1059 are enriched in basic and acidic residues; that stretch reads VKEETDIAEQKSEPMEVDEKKPEVKVEV. Glycyl lysine isopeptide (Lys-Gly) (interchain with G-Cter in SUMO1) cross-links involve residues Lys1033 and Lys1056. A compositionally biased stretch (low complexity) spans 1066-1078; it reads SSNGTASQSTSPS. Ser1076 bears the Phosphoserine mark. The region spanning 1085–1192 is the Bromo domain; the sequence is FKPEELRQAL…EVFEQEIDPV (108 aa). The segment at 1124–1170 is interaction with histone; that stretch reads DYFDIVKNPMDLSTIKRKLDTGQYQEPWQYVDDVWLMFNNAWLYNRK. The tract at residues 1162–1180 is interaction with ASF1A; sequence NNAWLYNRKTSRVYKFCSK. Lys1216 bears the N6-acetyllysine mark. One can recognise a CBP/p300-type HAT domain in the interval 1323 to 1700; that stretch reads KFSAKRLQTT…MLVELHTQGQ (378 aa). Phosphoserine; by IKKA occurs at positions 1382 and 1386. The interaction with histone stretch occupies residues 1433-1435; sequence YLD. Acetyl-CoA contacts are provided by residues 1434 to 1436, 1446 to 1447, Ile1493, Arg1498, and Trp1502; these read LDS and RT. Residues 1460–1891 form an interaction with TRERF1 region; it reads YVKKLGYVTG…LPSPTSAPPG (432 aa). Over residues 1556–1568 the composition is skewed to basic and acidic residues; it reads LEQEEEERKKEES. The segment at 1556–1615 is disordered; the sequence is LEQEEEERKKEESTAASETTEGSQGDSKNAKKKNNKKTNKNKSSISRANKKKPSMPNVSN. N6-acetyllysine is present on residues Lys1583, Lys1591, Lys1592, Lys1595, and Lys1597. Positions 1585 to 1595 are enriched in basic residues; sequence AKKKNNKKTNK. The ZZ-type zinc-finger motif lies at 1702 to 1750; it reads RFVYTCNECKHHVETRWHCTVCEDYDLCINCYNTKSHAHKMVKWGLGLD. 8 residues coordinate Zn(2+): Cys1707, Cys1710, Cys1720, Cys1723, Cys1729, Cys1732, His1738, and His1740. Lys1741 and Lys1744 each carry N6-acetyllysine. At Ser1763 the chain carries Phosphoserine. Residues 1765-1846 form a TAZ-type 2 zinc finger; that stretch reads QESRRLSIQR…KCPVPFCLNI (82 aa). Disordered regions lie at residues 1874-1959 and 1977-2028; these read TRNV…VEAA and INNS…PLPQ. A compositionally biased stretch (pro residues) spans 1900 to 1912; that stretch reads PQTPQPPAQPQPS. The span at 1925-1940 shows a compositional bias: polar residues; it reads ARTQPPTTVSTGKPTS. The segment covering 1943 to 1954 has biased composition (pro residues); the sequence is PAPPPPAQPPPA. Positions 2018 to 2027 are enriched in low complexity; sequence PGQWQQAPLP. A phosphoserine mark is found at Ser2063, Ser2076, and Ser2079. 5 stretches are compositionally biased toward low complexity: residues 2112–2137, 2146–2160, 2196–2219, 2228–2263, and 2294–2305; these read QPGMQPQPGLQSQPGMQPQPGMHQQP, QAGVPRPGVPPQQQA, QLLQQQQQQQQQQQQQQQQQQGSA, HGQFQQPQGPGGYPPAMQQQQRMQQHLPLQGSSMGQ, and RILQQQQMKQQI. Disordered regions lie at residues 2112 to 2263 and 2294 to 2433; these read QPGM…SMGQ and RILQ…TTGD. Polar residues-rich tracts occupy residues 2315–2327 and 2334–2343; these read SPQQHMLSGQPQA and QIATSLSNQV. Residues 2349 to 2372 show a composition bias toward pro residues; it reads VQSPRPQSQPPHSSPSPRIQPQPS. At Ser2351 the chain carries Phosphoserine. Residues 2411–2424 are compositionally biased toward polar residues; that stretch reads QLNTPSRSALSSEL.

Found in a complex containing NCOA2; NCOA3; IKKA; IKKB and IKBKG. Probably part of a complex with HIF1A and EP300. Interacts with GATA1; the interaction results in acetylation and enhancement of transcriptional activity of GATA1. Interacts with MAF and ZCCHC12. Interacts with DAXX; the interaction is dependent on CBP sumoylation and results in suppression of the transcriptional activity via recruitment of HDAC2 to DAXX. Interacts with phosphorylated CREB1. Interacts with CITED4 (C-terminal region). Interacts (via the TAZ-type 1 domain) with HIF1A. Interacts with SRCAP, CARM1, ELF3, MLLT7/FOXO4, N4BP2, NCOA1, NCOA3, NCOA6, PCAF, DDX5, DDX17, PELP1, PML, SMAD1, SMAD2, SMAD3, SPIB and TRERF1. Interacts with KLF1; the interaction results in acetylation of KLF1 and enhancement of its transcriptional activity. Interacts with MTDH. Interacts with NFATC4. Interacts with MAFG; the interaction acetylates MAFG in the basic region and stimulates NFE2 transcriptional activity through increasing its DNA-binding activity. Interacts with IRF2; the interaction acetylates IRF2 and regulates its activity on the H4 promoter. Interacts with IRF3 (when phosphorylated); forming the dsRNA-activated factor 1 (DRAF1), a complex which activates the transcription of the type I interferon genes. Interacts (via N-terminus) with SS18L1/CREST (via C-terminus). Interacts with MECOM. Interacts with CITED1 (via C-terminus). Interacts with FOXO1; the interaction acetylates FOXO1 and inhibits its transcriptional activity. Interacts with NPAS2, CLOCK and BMAL1. Interacts with ASF1A and ASF1B; this promotes histone acetylation. Interacts with acetylated TP53/p53 and with the acetylated histones H3 and H4. Interacts (via transactivation domain and C-terminus) with PCNA; the interaction occurs on chromatin in UV-irradiated damaged cells. Interacts with DHX9 (via N-terminus); this interaction mediates association with RNA polymerase II holoenzyme and stimulates CREB-dependent transcriptional activation. Interacts with SMAD4; negatively regulated by ZBTB7A. Interacts with DUX4 (via C-terminus). Forms a complex with KMT2A and CREB1. Interacts with DDX3X; this interaction may facilitate HNF4A acetylation. Interacts with MSX1; the interaction may inhibit MSX1 autoinactivation. Interacts with ACSS2. In terms of assembly, (Microbial infection) Interacts with HTLV-1 Tax, p30II and HBZ. As to quaternary structure, (Microbial infection) Interacts with human herpes virus 8/HHV-8 protein vIRF-1; this interaction inhibits CREBBP binding to IRF3. (Microbial infection) Interacts with HIV-1 Tat. Methylation of the KIX domain by CARM1 blocks association with CREB. This results in the blockade of CREB signaling, and in activation of apoptotic response. Post-translationally, phosphorylated by CHUK/IKKA at Ser-1382 and Ser-1386; these phosphorylations promote cell growth by switching the binding preference of CREBBP from TP53 to NF-kappa-B. Phosphorylated by _ at Ser-124 in response to DNA damage, promoting interaction with MRE11 and lactylation of MRE11. In terms of processing, sumoylation negatively regulates transcriptional activity via the recruitment of DAAX. Autoacetylation is required for binding to protein substrates, such as acetylated histones and acetylated TP53/p53. Autoacetylation is induced by glucose and fatty acids.

It is found in the cytoplasm. The protein localises to the nucleus. It carries out the reaction L-lysyl-[histone] + acetyl-CoA = N(6)-acetyl-L-lysyl-[histone] + CoA + H(+). It catalyses the reaction L-lysyl-[protein] + acetyl-CoA = N(6)-acetyl-L-lysyl-[protein] + CoA + H(+). The catalysed reaction is (S)-lactoyl-CoA + L-lysyl-[protein] = N(6)-[(S)-lactoyl]-L-lysyl-[protein] + CoA + H(+). Functionally, acetylates histones, giving a specific tag for transcriptional activation. Mediates acetylation of histone H3 at 'Lys-18' and 'Lys-27' (H3K18ac and H3K27ac, respectively). Also acetylates non-histone proteins, like DDX21, FBL, IRF2, MAFG, NCOA3, POLR1E/PAF53 and FOXO1. Binds specifically to phosphorylated CREB and enhances its transcriptional activity toward cAMP-responsive genes. Acts as a coactivator of ALX1. Acts as a circadian transcriptional coactivator which enhances the activity of the circadian transcriptional activators: NPAS2-BMAL1 and CLOCK-BMAL1 heterodimers. Acetylates PCNA; acetylation promotes removal of chromatin-bound PCNA and its degradation during nucleotide excision repair (NER). Acetylates POLR1E/PAF53, leading to decreased association of RNA polymerase I with the rDNA promoter region and coding region. Acetylates DDX21, thereby inhibiting DDX21 helicase activity. Acetylates FBL, preventing methylation of 'Gln-105' of histone H2A (H2AQ104me). In addition to protein acetyltransferase, can use different acyl-CoA substrates, such as lactoyl-CoA, and is able to mediate protein lactylation. Catalyzes lactylation of MRE11 in response to DNA damage, thereby promoting DNA double-strand breaks (DSBs) via homologous recombination (HR). Functions as a transcriptional coactivator for SMAD4 in the TGF-beta signaling pathway. The protein is CREB-binding protein of Homo sapiens (Human).